Here is a 184-residue protein sequence, read N- to C-terminus: ATP synthase subunit b, chloroplastic (184 aa).

Residues leucine 27 to leucine 49 traverse the membrane as a helical segment.

This sequence belongs to the ATPase B chain family. As to quaternary structure, F-type ATPases have 2 components, F(1) - the catalytic core - and F(0) - the membrane proton channel. F(1) has five subunits: alpha(3), beta(3), gamma(1), delta(1), epsilon(1). F(0) has four main subunits: a(1), b(1), b'(1) and c(10-14). The alpha and beta chains form an alternating ring which encloses part of the gamma chain. F(1) is attached to F(0) by a central stalk formed by the gamma and epsilon chains, while a peripheral stalk is formed by the delta, b and b' chains.

Its subcellular location is the plastid. The protein localises to the chloroplast thylakoid membrane. Functionally, f(1)F(0) ATP synthase produces ATP from ADP in the presence of a proton or sodium gradient. F-type ATPases consist of two structural domains, F(1) containing the extramembraneous catalytic core and F(0) containing the membrane proton channel, linked together by a central stalk and a peripheral stalk. During catalysis, ATP synthesis in the catalytic domain of F(1) is coupled via a rotary mechanism of the central stalk subunits to proton translocation. Component of the F(0) channel, it forms part of the peripheral stalk, linking F(1) to F(0). The sequence is that of ATP synthase subunit b, chloroplastic from Nicotiana tomentosiformis (Tobacco).